A 360-amino-acid polypeptide reads, in one-letter code: Lactosylceramide 4-alpha-galactosyltransferase (360 aa).

Residues 1–30 lie on the Cytoplasmic side of the membrane; sequence MGISRSDLEETMSKPPDCLPRMLRGTPRQR. The chain crosses the membrane as a helical; Signal-anchor for type II membrane protein span at residues 31-51; it reads VFTLFIISFKFTFLVSILIYW. Over 52–360 the chain is Lumenal; sequence HTVGAPKDQR…TTHRAMTMYL (309 aa). Positions 199 to 201 match the DXD motif motif; the sequence is DTD. 2 N-linked (GlcNAc...) asparagine glycosylation sites follow: Asn210 and Asn316.

It belongs to the glycosyltransferase 32 family. In terms of tissue distribution, ubiquitous. Highly expressed in kidney, mesenteric lymph node, spleen and brain.

It is found in the golgi apparatus membrane. The catalysed reaction is a beta-D-Gal-(1-&gt;4)-beta-D-Glc-(1&lt;-&gt;1)-Cer(d18:1(4E)) + UDP-alpha-D-galactose = a globoside Gb3Cer (d18:1(4E)) + UDP + H(+). The enzyme catalyses a beta-D-Gal-(1&lt;-&gt;1')-ceramide + UDP-alpha-D-galactose = alpha-D-Gal-(1-&gt;4)-beta-D-Gal-(1&lt;-&gt;1')-Cer + UDP + H(+). Its pathway is glycolipid biosynthesis. Catalyzes the transfer of galactose from UDP-alpha-D-galactose to lactosylceramide/beta-D-galactosyl-(1-&gt;4)-beta-D-glucosyl-(1&lt;-&gt;1)-ceramide(d18:1(4E)) to produce globotriaosylceramide/globoside Gb3Cer (d18:1(4E)). Also able to transfer galactose to galactosylceramide/beta-D-Gal-(1&lt;-&gt;1')-Cer. Globoside Gb3Cer is a glycosphingolipid of the globo serie, one of the major types of neutral root structures of glycosphingolipids, that constitute a significant portion of mammalian cell membranes. The polypeptide is Lactosylceramide 4-alpha-galactosyltransferase (Rattus norvegicus (Rat)).